The sequence spans 316 residues: Ribosomal protein L11 methyltransferase (316 aa).

S-adenosyl-L-methionine-binding residues include T161, G182, D204, and N249.

The protein belongs to the methyltransferase superfamily. PrmA family.

The protein localises to the cytoplasm. The enzyme catalyses L-lysyl-[protein] + 3 S-adenosyl-L-methionine = N(6),N(6),N(6)-trimethyl-L-lysyl-[protein] + 3 S-adenosyl-L-homocysteine + 3 H(+). Its function is as follows. Methylates ribosomal protein L11. The polypeptide is Ribosomal protein L11 methyltransferase (Ruminiclostridium cellulolyticum (strain ATCC 35319 / DSM 5812 / JCM 6584 / H10) (Clostridium cellulolyticum)).